Reading from the N-terminus, the 582-residue chain is UPF0329 protein ECU07_0070 (582 aa).

Residues 326–386 (EEKAKSKKKG…KTGKKSKGDQ (61 aa)) form a disordered region. Basic residues predominate over residues 330–339 (KSKKKGKKKS). Residues 344–354 (EAKEEEKKESG) are compositionally biased toward basic and acidic residues.

It belongs to the UPF0329 family.

This chain is UPF0329 protein ECU07_0070, found in Encephalitozoon cuniculi (strain GB-M1) (Microsporidian parasite).